The primary structure comprises 540 residues: Cobalt-factor III methyltransferase (540 aa).

[4Fe-4S] cluster-binding residues include Cys402, Cys405, Cys439, and Cys443.

This sequence in the N-terminal section; belongs to the precorrin methyltransferase family. Requires [4Fe-4S] cluster as cofactor.

It carries out the reaction Co(II)-factor III + AH2 + S-adenosyl-L-methionine = Co-precorrin-4 + A + S-adenosyl-L-homocysteine. It participates in cofactor biosynthesis; adenosylcobalamin biosynthesis. Its function is as follows. Methyltransferase that catalyzes the reduction, ring contraction and methylation of C-17 in cobalt-factor III to form cobalt-precorrin-4. Is also able to convert cobalt-precorrin-3 to cobalt-precorrin-4. This Priestia megaterium (Bacillus megaterium) protein is Cobalt-factor III methyltransferase (cbiH60).